Here is a 727-residue protein sequence, read N- to C-terminus: Procollagen-lysine,2-oxoglutarate 5-dioxygenase 1 (727 aa).

A signal peptide spans 1 to 18; the sequence is MRPLLLLAPLGWLLLAEA. N-linked (GlcNAc...) asparagine glycans are attached at residues asparagine 163, asparagine 197, and asparagine 538. Positions 636–727 constitute a Fe2OG dioxygenase domain; the sequence is QFDLAFVVRY…RYIAVSFVDP (92 aa). Positions 656 and 658 each coordinate Fe cation. The N-linked (GlcNAc...) asparagine glycan is linked to asparagine 686. Histidine 708 is a binding site for Fe cation. Residue arginine 718 is part of the active site.

As to quaternary structure, homodimer. Identified in a complex with P3H3 and P3H4. Fe(2+) serves as cofactor. The cofactor is L-ascorbate.

The protein localises to the rough endoplasmic reticulum membrane. The enzyme catalyses L-lysyl-[collagen] + 2-oxoglutarate + O2 = (5R)-5-hydroxy-L-lysyl-[collagen] + succinate + CO2. Functionally, part of a complex composed of PLOD1, P3H3 and P3H4 that catalyzes hydroxylation of lysine residues in collagen alpha chains and is required for normal assembly and cross-linkling of collagen fibrils. Forms hydroxylysine residues in -Xaa-Lys-Gly- sequences in collagens. These hydroxylysines serve as sites of attachment for carbohydrate units and are essential for the stability of the intermolecular collagen cross-links. This is Procollagen-lysine,2-oxoglutarate 5-dioxygenase 1 (PLOD1) from Pongo abelii (Sumatran orangutan).